The following is a 365-amino-acid chain: Fructose-1,6-bisphosphate aldolase/phosphatase (365 aa).

Asp11 acts as the Proton acceptor; for FBP phosphatase activity in catalysis. Mg(2+) contacts are provided by Asp11, His18, Asp52, and Asp53. Residue His18 participates in beta-D-fructose 1,6-bisphosphate binding. His18 serves as a coordination point for dihydroxyacetone phosphate. Tyr90 provides a ligand contact to beta-D-fructose 1,6-bisphosphate. Position 94 (Gln94) interacts with Mg(2+). 103 to 104 (GN) serves as a coordination point for beta-D-fructose 1,6-bisphosphate. Asp131 serves as a coordination point for Mg(2+). Lys132 is a beta-D-fructose 1,6-bisphosphate binding site. Residue Lys132 coordinates dihydroxyacetone phosphate. Tyr228 (proton donor/acceptor; for FBP aldolase activity) is an active-site residue. Lys231, Asp232, and Asp233 together coordinate Mg(2+). Lys231 acts as the Schiff-base intermediate with DHAP; for FBP aldolase activity in catalysis. Beta-D-fructose 1,6-bisphosphate is bound by residues 241 to 242 (QS), Arg265, Asp286, and Tyr347. Dihydroxyacetone phosphate is bound by residues Arg265 and Asp286.

It belongs to the FBP aldolase/phosphatase family. Homooctamer; dimer of tetramers. Requires Mg(2+) as cofactor.

It carries out the reaction beta-D-fructose 1,6-bisphosphate + H2O = beta-D-fructose 6-phosphate + phosphate. The enzyme catalyses beta-D-fructose 1,6-bisphosphate = D-glyceraldehyde 3-phosphate + dihydroxyacetone phosphate. Its pathway is carbohydrate biosynthesis; gluconeogenesis. Its function is as follows. Catalyzes two subsequent steps in gluconeogenesis: the aldol condensation of dihydroxyacetone phosphate (DHAP) and glyceraldehyde-3-phosphate (GA3P) to fructose-1,6-bisphosphate (FBP), and the dephosphorylation of FBP to fructose-6-phosphate (F6P). This Methanothermobacter marburgensis (strain ATCC BAA-927 / DSM 2133 / JCM 14651 / NBRC 100331 / OCM 82 / Marburg) (Methanobacterium thermoautotrophicum) protein is Fructose-1,6-bisphosphate aldolase/phosphatase.